A 418-amino-acid polypeptide reads, in one-letter code: MVADTDVKEIVVDALPEVSEPAAVDDSEVTEDATVQDKKKKKKKKKKKGNNMKNIALIYPDEKYPEGQWMEYHQDFNLKRVTDEERRYLERSEEYEQRCNDMRKGAEIHRRVRESVRNKIKPGMTLTEIANLVEDGTRKFTGTDANGDHVDRPKSQGIAFPTGLSLNHCAAHFTPNAGDKTVLKFEDVMKVDFGVHVNGYIIDSAFTIAFDPQYDNLLAAVKDATNTGIKEAGIDVRLTDIGEAIQEVMESYEVEINGETHQVKPCRNLCGHNINPYSIHGGKSVPIVKNGDNTKMEENEHFAIETFGSTGRGYVIQEGECSHYAKKPGSHPTPSLSSAKNLLKVIDENFGTIPFCRRYLDRLGEDKHVYALNTLVRQGIVEDYPPLNDIKGSYTAQFEHTLILHPHKKEIVSRGDDY.

The tract at residues Val-18–Gly-49 is disordered. Residues Lys-38–Gly-49 are compositionally biased toward basic residues. His-172 serves as a coordination point for substrate. Residues Asp-192, Asp-203, and His-272 each contribute to the a divalent metal cation site. His-280 is a substrate binding site. A divalent metal cation-binding residues include Glu-305 and Glu-399.

Belongs to the peptidase M24A family. Methionine aminopeptidase eukaryotic type 2 subfamily. Requires Co(2+) as cofactor. The cofactor is Zn(2+). It depends on Mn(2+) as a cofactor. Fe(2+) is required as a cofactor.

The protein resides in the cytoplasm. The catalysed reaction is Release of N-terminal amino acids, preferentially methionine, from peptides and arylamides.. Functionally, cotranslationally removes the N-terminal methionine from nascent proteins. The N-terminal methionine is often cleaved when the second residue in the primary sequence is small and uncharged (Met-Ala-, Cys, Gly, Pro, Ser, Thr, or Val). This Kluyveromyces lactis (strain ATCC 8585 / CBS 2359 / DSM 70799 / NBRC 1267 / NRRL Y-1140 / WM37) (Yeast) protein is Methionine aminopeptidase 2.